The primary structure comprises 169 residues: Large ribosomal subunit protein uL10 (169 aa).

It belongs to the universal ribosomal protein uL10 family. As to quaternary structure, part of the ribosomal stalk of the 50S ribosomal subunit. The N-terminus interacts with L11 and the large rRNA to form the base of the stalk. The C-terminus forms an elongated spine to which L12 dimers bind in a sequential fashion forming a multimeric L10(L12)X complex.

Forms part of the ribosomal stalk, playing a central role in the interaction of the ribosome with GTP-bound translation factors. The polypeptide is Large ribosomal subunit protein uL10 (Deinococcus geothermalis (strain DSM 11300 / CIP 105573 / AG-3a)).